The following is a 96-amino-acid chain: UPF0235 protein Helmi_20270 (96 aa).

Belongs to the UPF0235 family.

The protein is UPF0235 protein Helmi_20270 of Heliobacterium modesticaldum (strain ATCC 51547 / Ice1).